A 232-amino-acid chain; its full sequence is Aspartate/glutamate leucyltransferase (232 aa).

The protein belongs to the R-transferase family. Bpt subfamily.

Its subcellular location is the cytoplasm. The catalysed reaction is N-terminal L-glutamyl-[protein] + L-leucyl-tRNA(Leu) = N-terminal L-leucyl-L-glutamyl-[protein] + tRNA(Leu) + H(+). It catalyses the reaction N-terminal L-aspartyl-[protein] + L-leucyl-tRNA(Leu) = N-terminal L-leucyl-L-aspartyl-[protein] + tRNA(Leu) + H(+). Functionally, functions in the N-end rule pathway of protein degradation where it conjugates Leu from its aminoacyl-tRNA to the N-termini of proteins containing an N-terminal aspartate or glutamate. The chain is Aspartate/glutamate leucyltransferase from Vibrio vulnificus (strain CMCP6).